Here is a 200-residue protein sequence, read N- to C-terminus: BREX protein BrxB (200 aa).

This sequence belongs to the BrxB family.

Its function is as follows. BREX systems (bacteriophage exclusion) provide immunity against bacteriophage. Part of a type 1 BREX system which protects against dsDNA phage. This system allows phage adsorption but prevents phage DNA replication, without degradation of the phage DNA. Methylation of bacterial DNA by PglX guides self/non-self discrimination. When the brxA-brxB-brxC-pglX-pglZ-brxL genes are transformed into a susceptible E.coli strain (BW25113) they confer very high resistance to infection by bacteriophage VR7 and VpaE1, about 100-fold protection against lambda, T5 and T7 and no protection against RNA phage Qbeta, ssDNA phage M13 or dSDNA phage T4 and VR5. Glycosylated phage DNA is not susceptible to BREX. The BREX system does not confer resistance to lysogenic lambda phage, i.e. prophage that are integrated into the chromosomal DNA and then induced to form phage. In Escherichia coli O9:H4 (strain HS), this protein is BREX protein BrxB.